The following is a 108-amino-acid chain: Histone H4 (108 aa).

Positions 1–36 (MSSAQSRGGKTGGKVGGKVGAKRHKKTQKEHINGIT) are disordered. Positions 9-19 (GKTGGKVGGKV) are enriched in gly residues.

This sequence belongs to the histone H4 family. The nucleosome is a histone octamer containing two molecules each of H2A, H2B, H3 and H4 assembled in one H3-H4 heterotetramer and two H2A-H2B heterodimers. The octamer wraps approximately 147 bp of DNA.

The protein resides in the nucleus. The protein localises to the chromosome. Functionally, core component of nucleosome. Nucleosomes wrap and compact DNA into chromatin, limiting DNA accessibility to the cellular machineries which require DNA as a template. Histones thereby play a central role in transcription regulation, DNA repair, DNA replication and chromosomal stability. DNA accessibility is regulated via a complex set of post-translational modifications of histones, also called histone code, and nucleosome remodeling. This is Histone H4 (H4a) from Dictyostelium discoideum (Social amoeba).